The chain runs to 424 residues: N-succinylarginine dihydrolase (424 aa).

Substrate-binding positions include 19-28, N110, and 137-138; these read AGLSRGNVAS and HR. Residue E174 is part of the active site. R206 lines the substrate pocket. H242 is an active-site residue. Residues D244 and N351 each coordinate substrate. C357 acts as the Nucleophile in catalysis.

The protein belongs to the succinylarginine dihydrolase family. In terms of assembly, homodimer.

It catalyses the reaction N(2)-succinyl-L-arginine + 2 H2O + 2 H(+) = N(2)-succinyl-L-ornithine + 2 NH4(+) + CO2. It participates in amino-acid degradation; L-arginine degradation via AST pathway; L-glutamate and succinate from L-arginine: step 2/5. Functionally, catalyzes the hydrolysis of N(2)-succinylarginine into N(2)-succinylornithine, ammonia and CO(2). The sequence is that of N-succinylarginine dihydrolase from Zymomonas mobilis subsp. mobilis (strain ATCC 31821 / ZM4 / CP4).